We begin with the raw amino-acid sequence, 631 residues long: Extracellular metalloproteinase mep (631 aa).

Positions 1 to 19 are cleaved as a signal peptide; that stretch reads MHGLRLVCSIGTLPLVILA. Positions 20-241 are excised as a propeptide; it reads YPAASLHTTS…VHGVVDYVAD (222 aa). 3 N-linked (GlcNAc...) asparagine glycosylation sites follow: N282, N332, and N364. Position 425 (H425) interacts with Zn(2+). E426 is a catalytic residue. Position 429 (H429) interacts with Zn(2+). Residues N470 and N505 are each glycosylated (N-linked (GlcNAc...) asparagine).

It belongs to the peptidase M36 family. It depends on Zn(2+) as a cofactor.

The protein localises to the secreted. In terms of biological role, secreted metalloproteinase that allows assimilation of proteinaceous substrates. In Aspergillus niger (strain ATCC MYA-4892 / CBS 513.88 / FGSC A1513), this protein is Extracellular metalloproteinase mep (mep).